The following is a 134-amino-acid chain: Small ribosomal subunit protein uS8c (134 aa).

This sequence belongs to the universal ribosomal protein uS8 family. In terms of assembly, part of the 30S ribosomal subunit.

The protein localises to the plastid. Its subcellular location is the chloroplast. Its function is as follows. One of the primary rRNA binding proteins, it binds directly to 16S rRNA central domain where it helps coordinate assembly of the platform of the 30S subunit. The polypeptide is Small ribosomal subunit protein uS8c (rps8) (Phaseolus angularis (Azuki bean)).